Consider the following 898-residue polypeptide: Chloride channel protein 2 (898 aa).

N-acetylalanine is present on Ala2. At 2 to 87 (AAAAAEEGME…RCHKFLVSRV (86 aa)) the chain is on the cytoplasmic side. The interval 16–34 (QYEQTLMYGRYTQDLGAFA) is essential for channel gating by both voltage and cell volume. Thr20 carries the post-translational modification Phosphothreonine. The modulates channel gating by both voltage and cell volume stretch occupies residues 36–49 (EEAARIRLGGPEPW). A run of 2 helical transmembrane segments spans residues 88-121 (GEDW…AQQW) and 130-155 (ILLQ…TQIL). Residues 161 to 165 (GSGIP) carry the Selectivity filter part_1 motif. Ser162 contacts chloride. Residues 164-171 (IPEMKTIL) constitute an intramembrane region (helical). Helical transmembrane passes span 180-198 (LTLK…ALGS) and 205-223 (EGPF…SKFL). A Selectivity filter part_2 motif is present at residues 203–207 (GKEGP). 2 consecutive intramembrane regions (helical) follow at residues 239–251 (MLAA…VGCC) and 255–263 (PIGGVLFSI). 5 helical membrane-spanning segments follow: residues 275–295 (YWRG…LAVW), 321–349 (LPAF…VQVM), 358–377 (FLMR…ISTL), 429–449 (ANVF…SALA), and 457–480 (GAFM…MAAW). Residues 457 to 461 (GAFMP) carry the Selectivity filter part_3 motif. Phe459 serves as a coordination point for chloride. Positions 497–511 (GGYAVVGAAALAGAV) form an intramembrane region, helical. The segment at residues 512-513 (TH) is an intramembrane region (note=Loop between two helices). The segment at residues 514–525 (TVSTAVIVFELT) is an intramembrane region (helical). The note=Loop between two helices intramembrane region spans 526–530 (GQIAH). Residues 531–548 (ILPVMIAVILANAVAQSL) form a helical membrane-spanning segment. The Cytoplasmic portion of the chain corresponds to 549–898 (QPSLYDSIIR…SPSDSDDKCQ (350 aa)). Residue Tyr553 participates in chloride binding. One can recognise a CBS 1 domain in the interval 584–642 (MVRDVPHVALSCTFRDLRLALHRTKGRMLALVESPESMILLGSIERSQVVALLGAQLSP). 2 disordered regions span residues 643–672 (ARRR…PEAS) and 686–717 (AARG…TGSA). Over residues 705–717 (VTRNLGESPTGSA) the composition is skewed to polar residues. 2 positions are modified to phosphoserine: Ser712 and Ser758. The CBS 2 domain maps to 790–850 (IDPAPFQLVE…GSVTAQGVKV (61 aa)). Residues 812-813 (LL) carry the Basolateral membrane sorting motif. The disordered stretch occupies residues 856-898 (SFRDSATSSSDTETTEVHALWGPHSRHGLPREGSPSDSDDKCQ).

Belongs to the chloride channel (TC 2.A.49) family. ClC-2/CLCN2 subfamily. In terms of assembly, homodimer. Interacts with auxiliary subunit HEPACAM. Post-translationally, phosphorylated. Activated by dephosphorylation. As to expression, ubiquitously expressed. Moderately expressed in aortic and coronary vascular smooth muscle cells and expressed at a low level in aortic endothelial cells. Expressed in the adrenal gland, predominantly in the zona glomerulosa. Expressed in white mater perivascular astrocytes and ependymal cells (at protein level).

It is found in the cell membrane. It localises to the basolateral cell membrane. The protein resides in the cell projection. The protein localises to the dendritic spine membrane. Its subcellular location is the axon. The catalysed reaction is chloride(in) = chloride(out). It carries out the reaction thiocyanate(in) = thiocyanate(out). The enzyme catalyses bromide(in) = bromide(out). It catalyses the reaction nitrate(in) = nitrate(out). The catalysed reaction is iodide(out) = iodide(in). Common gate kinetics are down-regulated by intracellular ATP. Inhibited by AK-42, a derivative of meclofenamate. Inhibited by Cd(2+). Inhibited by Zn(2+) and PKC activation. Inhibited at acidic pH. CCLN2:HEPACAM channel conductance is up-regulated upon hypo-osmolarity. Voltage-gated and osmosensitive chloride channel. Forms a homodimeric channel where each subunit has its own ion conduction pathway. Conducts double-barreled currents controlled by two types of gates, two fast glutamate gates that control each subunit independently and a slow common gate that opens and shuts off both subunits simultaneously. Displays inward rectification currents activated upon membrane hyperpolarization and extracellular hypotonicity. Contributes to chloride conductance involved in neuron excitability. In hippocampal neurons, generates a significant part of resting membrane conductance and provides an additional chloride efflux pathway to prevent chloride accumulation in dendrites upon GABA receptor activation. In glia, associates with the auxiliary subunit HEPACAM/GlialCAM at astrocytic processes and myelinated fiber tracts where it may regulate transcellular chloride flux buffering extracellular chloride and potassium concentrations. Regulates aldosterone production in adrenal glands. The opening of CLCN2 channels at hyperpolarized membrane potentials in the glomerulosa causes cell membrane depolarization, activation of voltage-gated calcium channels and increased expression of aldosterone synthase, the rate-limiting enzyme for aldosterone biosynthesis. Contributes to chloride conductance in retinal pigment epithelium involved in phagocytosis of shed photoreceptor outer segments and photoreceptor renewal. Conducts chloride currents at the basolateral membrane of epithelial cells with a role in chloride reabsorption rather than secretion. Permeable to small monovalent anions with chloride &gt; thiocyanate &gt; bromide &gt; nitrate &gt; iodide ion selectivity. In Homo sapiens (Human), this protein is Chloride channel protein 2.